The sequence spans 175 residues: Ribosome maturation factor RimP (175 aa).

The interval 152 to 175 (EFNRPTDGPGDDGDDGGDDEAGEA) is disordered. Over residues 160-175 (PGDDGDDGGDDEAGEA) the composition is skewed to acidic residues.

This sequence belongs to the RimP family.

It is found in the cytoplasm. Its function is as follows. Required for maturation of 30S ribosomal subunits. The polypeptide is Ribosome maturation factor RimP (Nocardioides sp. (strain ATCC BAA-499 / JS614)).